Reading from the N-terminus, the 511-residue chain is Glutamate/gamma-aminobutyrate antiporter (511 aa).

Residues 1-14 (MATLVQTGKAKQLT) lie on the Cytoplasmic side of the membrane. Residues 15–35 (LLGFFAITASMVMAVYEYPTF) traverse the membrane as a helical segment. The Periplasmic portion of the chain corresponds to 36-41 (ATSGFS). Residues 42–62 (LVFFLLLGGILWFIPVGLCAA) traverse the membrane as a helical segment. At 63-93 (EMATVDGWEEGGVFAWVSNTLGPRWGFAAIS) the chain is on the cytoplasmic side. A helical membrane pass occupies residues 94 to 114 (FGYLQIAIGFIPMLYFVLGAL). Topologically, residues 115–127 (SYILKWPALNEDP) are periplasmic. The chain crosses the membrane as a helical span at residues 128 to 148 (ITKTIAALIILWALALTQFGG). The Cytoplasmic segment spans residues 149–157 (TKYTARIAK). The helical transmembrane segment at 158–178 (VGFFAGILLPAFILIALAAIY) threads the bilayer. The Periplasmic segment spans residues 179-200 (LHSGAPVAIEMDSKTFFPDFSK). Residues 201 to 221 (VGTLVVFVAFILSYMGVEASA) traverse the membrane as a helical segment. The Cytoplasmic portion of the chain corresponds to 222 to 239 (THVNEMSNPGRDYPLAML). The chain crosses the membrane as a helical span at residues 240–260 (LLMVAAICLSSVGGLSIAMVI). At 261–291 (PGNEINLSAGVMQTFTVLMSHVAPEIEWTVR) the chain is on the periplasmic side. Residues 292 to 312 (VISALLLLGVLAEIASWIVGP) form a helical membrane-spanning segment. The Cytoplasmic portion of the chain corresponds to 313–335 (SRGMYVTAQKNLLPAAFAKMNKN). A helical membrane pass occupies residues 336–356 (GVPVTLVISQLVITSIALIIL). Over 357-366 (TNTGGGNNMS) the chain is Periplasmic. A helical transmembrane segment spans residues 367–387 (FLIALALTVVIYLCAYFMLFI). Over 388-412 (GYIVLVLKHPDLKRTFNIPGGKGVK) the chain is Cytoplasmic. A helical membrane pass occupies residues 413 to 433 (LVVAIVGLLTSIMAFIVSFLP). At 434-445 (PDNIQGDSTDMY) the chain is on the periplasmic side. The chain crosses the membrane as a helical span at residues 446-466 (VELLVVSFLVVLALPFILYAV). Over 467–511 (HDRKGKANTGVTLEPINSQNAPKGHFFLHPRARSPHYIVMNDKKH) the chain is Cytoplasmic.

The protein belongs to the amino acid-polyamine-organocation (APC) superfamily. Glutamate:GABA antiporter (GGA) (TC 2.A.3.7) family.

It localises to the cell inner membrane. It carries out the reaction 4-aminobutanoate(in) + L-glutamate(out) = 4-aminobutanoate(out) + L-glutamate(in). Shows pH-dependent activity. The glutamate analog L-trans-pyrrolidine-2,4-dicarboxylic acid (L-PDC) blocks the uptake of glutamate by selective inhibition. Its function is as follows. Involved in glutaminase-dependent acid resistance. Exchanges extracellular glutamate (Glu) for intracellular gamma-aminobutyric acid (GABA) under acidic conditions. The ability to survive the extremely acidic conditions of the stomach is essential for successful colonization of the host by commensal and pathogenic bacteria. The polypeptide is Glutamate/gamma-aminobutyrate antiporter (gadC) (Escherichia coli O157:H7).